The sequence spans 362 residues: Heme A synthase (362 aa).

A run of 5 helical transmembrane segments spans residues 12–32 (AVKI…LVGG), 102–122 (VIGL…HLGG), 128–148 (LWLI…MVAS), 159–179 (ERLA…VWTL), and 198–218 (AAAL…VAGL). Heme is bound at residue His-262. A run of 3 helical transmembrane segments spans residues 264-286 (MLAY…ARAG), 291-311 (GAVW…FTLL), and 314-334 (VPIG…MLGV). A heme-binding site is contributed by His-322.

It belongs to the COX15/CtaA family. Type 2 subfamily. In terms of assembly, interacts with CtaB. It depends on heme b as a cofactor.

Its subcellular location is the cell membrane. It catalyses the reaction Fe(II)-heme o + 2 A + H2O = Fe(II)-heme a + 2 AH2. It participates in porphyrin-containing compound metabolism; heme A biosynthesis; heme A from heme O: step 1/1. Its function is as follows. Catalyzes the conversion of heme O to heme A by two successive hydroxylations of the methyl group at C8. The first hydroxylation forms heme I, the second hydroxylation results in an unstable dihydroxymethyl group, which spontaneously dehydrates, resulting in the formyl group of heme A. The protein is Heme A synthase of Rhodopseudomonas palustris (strain BisA53).